Here is a 246-residue protein sequence, read N- to C-terminus: UDP-2,3-diacylglucosamine hydrolase (246 aa).

Mn(2+) is bound by residues D8, H10, D41, N79, and H114. 79 to 80 (NR) lines the substrate pocket. Substrate-binding residues include D122, K164, K167, and H195. H195 and H197 together coordinate Mn(2+).

It belongs to the LpxH family. Mn(2+) serves as cofactor.

The protein localises to the cell inner membrane. It catalyses the reaction UDP-2-N,3-O-bis[(3R)-3-hydroxytetradecanoyl]-alpha-D-glucosamine + H2O = 2-N,3-O-bis[(3R)-3-hydroxytetradecanoyl]-alpha-D-glucosaminyl 1-phosphate + UMP + 2 H(+). It participates in glycolipid biosynthesis; lipid IV(A) biosynthesis; lipid IV(A) from (3R)-3-hydroxytetradecanoyl-[acyl-carrier-protein] and UDP-N-acetyl-alpha-D-glucosamine: step 4/6. In terms of biological role, hydrolyzes the pyrophosphate bond of UDP-2,3-diacylglucosamine to yield 2,3-diacylglucosamine 1-phosphate (lipid X) and UMP by catalyzing the attack of water at the alpha-P atom. Involved in the biosynthesis of lipid A, a phosphorylated glycolipid that anchors the lipopolysaccharide to the outer membrane of the cell. The sequence is that of UDP-2,3-diacylglucosamine hydrolase from Vibrio cholerae serotype O1 (strain ATCC 39541 / Classical Ogawa 395 / O395).